The following is a 429-amino-acid chain: Adenylosuccinate synthetase (429 aa).

GTP contacts are provided by residues 15–21 and 43–45; these read GDEGKGK and GHV. Aspartate 16 serves as the catalytic Proton acceptor. Mg(2+) is bound by residues aspartate 16 and glycine 43. IMP-binding positions include 16 to 19, 41 to 44, threonine 131, arginine 145, glutamine 225, threonine 240, and arginine 304; these read DEGK and NAGH. The Proton donor role is filled by histidine 44. 300–306 contacts substrate; that stretch reads SNTKRPR. GTP is bound by residues arginine 306, 332–334, and 414–416; these read LLD and SVG.

Belongs to the adenylosuccinate synthetase family. In terms of assembly, homodimer. Mg(2+) serves as cofactor.

It is found in the cytoplasm. The catalysed reaction is IMP + L-aspartate + GTP = N(6)-(1,2-dicarboxyethyl)-AMP + GDP + phosphate + 2 H(+). It functions in the pathway purine metabolism; AMP biosynthesis via de novo pathway; AMP from IMP: step 1/2. Its function is as follows. Plays an important role in the de novo pathway of purine nucleotide biosynthesis. Catalyzes the first committed step in the biosynthesis of AMP from IMP. The protein is Adenylosuccinate synthetase of Mesoplasma florum (strain ATCC 33453 / NBRC 100688 / NCTC 11704 / L1) (Acholeplasma florum).